The primary structure comprises 360 residues: Phenylalanine--tRNA ligase alpha subunit (360 aa).

Glu-260 lines the Mg(2+) pocket.

This sequence belongs to the class-II aminoacyl-tRNA synthetase family. Phe-tRNA synthetase alpha subunit type 1 subfamily. In terms of assembly, tetramer of two alpha and two beta subunits. Mg(2+) is required as a cofactor.

The protein localises to the cytoplasm. The catalysed reaction is tRNA(Phe) + L-phenylalanine + ATP = L-phenylalanyl-tRNA(Phe) + AMP + diphosphate + H(+). The polypeptide is Phenylalanine--tRNA ligase alpha subunit (Rhodopseudomonas palustris (strain ATCC BAA-98 / CGA009)).